A 333-amino-acid polypeptide reads, in one-letter code: Testin-2 (333 aa).

An N-terminal signal peptide occupies residues Met-1–Thr-17. Cystine bridges form between Cys-135-Cys-178, Cys-169-Cys-211, and Cys-269-Cys-322. Asn-173 is a glycosylation site (N-linked (GlcNAc...) asparagine). Catalysis depends on residues His-276 and Asn-300.

This sequence belongs to the peptidase C1 family. In terms of tissue distribution, expressed in testis and ovary. Low level in spleen, epididymis, kidney, and uterus. Expressed in primary cultures of Sertoli cells.

It is found in the secreted. This Mus musculus (Mouse) protein is Testin-2.